The chain runs to 231 residues: Ion-translocating oxidoreductase complex subunit E (231 aa).

Transmembrane regions (helical) follow at residues 18–38 (ALVQLLGLCPLLAVTSTATNA), 39–59 (LGLGLATTLVLTLTNLTISTL), 63–83 (TPAEIRIPIYVMIIASVVSAV), 86–106 (LINAYAFGLYQSLGIFIPLIV), 125–145 (ALSALDGFSIGMGATCAMFVL), and 182–202 (PFLLAMLPPGAFIGLGLMLAG).

It belongs to the NqrDE/RnfAE family. In terms of assembly, the complex is composed of six subunits: RsxA, RsxB, RsxC, RsxD, RsxE and RsxG.

It is found in the cell inner membrane. Its function is as follows. Part of a membrane-bound complex that couples electron transfer with translocation of ions across the membrane. Required to maintain the reduced state of SoxR. In Escherichia coli O1:K1 / APEC, this protein is Ion-translocating oxidoreductase complex subunit E.